The primary structure comprises 598 residues: DNA mismatch repair protein MutL (598 aa).

This sequence belongs to the DNA mismatch repair MutL/HexB family.

In terms of biological role, this protein is involved in the repair of mismatches in DNA. It is required for dam-dependent methyl-directed DNA mismatch repair. May act as a 'molecular matchmaker', a protein that promotes the formation of a stable complex between two or more DNA-binding proteins in an ATP-dependent manner without itself being part of a final effector complex. In Thiobacillus denitrificans (strain ATCC 25259 / T1), this protein is DNA mismatch repair protein MutL.